A 119-amino-acid chain; its full sequence is V-type proton ATPase subunit F (119 aa).

This sequence belongs to the V-ATPase F subunit family. In terms of assembly, V-ATPase is a heteromultimeric enzyme made up of two complexes: the ATP-hydrolytic V1 complex and the proton translocation V0 complex. The V1 complex consists of three catalytic AB heterodimers that form a heterohexamer, three peripheral stalks each consisting of EG heterodimers, one central rotor including subunits D and F, and the regulatory subunits C and H. The proton translocation complex V0 consists of the proton transport subunit a, a ring of proteolipid subunits c9c'', rotary subunit d, subunits e and f, and the accessory subunits ATP6AP1/Ac45 and ATP6AP2/PRR.

It is found in the cytoplasmic vesicle. Its subcellular location is the secretory vesicle. It localises to the synaptic vesicle membrane. The protein localises to the clathrin-coated vesicle membrane. In terms of biological role, subunit of the V1 complex of vacuolar(H+)-ATPase (V-ATPase), a multisubunit enzyme composed of a peripheral complex (V1) that hydrolyzes ATP and a membrane integral complex (V0) that translocates protons. V-ATPase is responsible for acidifying and maintaining the pH of intracellular compartments and in some cell types, is targeted to the plasma membrane, where it is responsible for acidifying the extracellular environment. The chain is V-type proton ATPase subunit F (ATP6V1F) from Homo sapiens (Human).